The sequence spans 236 residues: MESTDVNHSTAWAPGGMAHIISEAVIAGSIGLYFWKKISALEQTVQELQSQLEVQNNQLQWLIQQQTRRLAVSPLAVSPLAVSPLPPQRDYRQQSTTTNAAGNNGAYPSFQFKPPKTAIKGDAAPPQATPKMQCDNGVCKLVRPLQATHGKGARAPSPEKKTVSISKIAKQIEFEHDQIAPARTATTQVSTFSKPSPNPVLRSITPNPSIGEGRDGDESGPSARALDKILNDIDCE.

The chain crosses the membrane as a helical span at residues 15–34 (GGMAHIISEAVIAGSIGLYF). Residues 36–71 (KKISALEQTVQELQSQLEVQNNQLQWLIQQQTRRLA) are a coiled coil. 2 disordered regions span residues 83–113 (SPLP…FQFK) and 185–236 (ATTQ…IDCE). Polar residues-rich tracts occupy residues 93–102 (QQSTTTNAAG) and 185–195 (ATTQVSTFSKP). Basic and acidic residues predominate over residues 225-236 (ALDKILNDIDCE).

Its subcellular location is the membrane. This is an uncharacterized protein from Aedes vexans (Inland floodwater mosquito).